A 465-amino-acid polypeptide reads, in one-letter code: Argininosuccinate lyase (465 aa).

It belongs to the lyase 1 family. Argininosuccinate lyase subfamily.

Its subcellular location is the cytoplasm. The catalysed reaction is 2-(N(omega)-L-arginino)succinate = fumarate + L-arginine. It participates in amino-acid biosynthesis; L-arginine biosynthesis; L-arginine from L-ornithine and carbamoyl phosphate: step 3/3. This is Argininosuccinate lyase from Methylococcus capsulatus (strain ATCC 33009 / NCIMB 11132 / Bath).